The primary structure comprises 95 residues: Acylphosphatase (95 aa).

One can recognise an Acylphosphatase-like domain in the interval 9 to 95 (RLTAWVHGRV…KGGLTGFVER (87 aa)). Catalysis depends on residues R24 and N42.

The protein belongs to the acylphosphatase family.

The catalysed reaction is an acyl phosphate + H2O = a carboxylate + phosphate + H(+). This chain is Acylphosphatase (acyP), found in Saccharopolyspora erythraea (strain ATCC 11635 / DSM 40517 / JCM 4748 / NBRC 13426 / NCIMB 8594 / NRRL 2338).